The following is a 380-amino-acid chain: Phospho-N-acetylmuramoyl-pentapeptide-transferase (380 aa).

The next 11 membrane-spanning stretches (helical) occupy residues 26–46, 75–95, 98–118, 135–155, 161–181, 183–203, 222–242, 259–279, 283–303, 311–331, and 357–377; these read IVAA…IFIE, MGGA…ADLA, FVWA…TDDW, LVLQ…DWRF, FPWV…FVPS, LFNP…VIAT, VVSA…IAGF, LGVF…YNTY, VFMG…MAVL, AILH…VWSF, and KIIV…LLSI.

Belongs to the glycosyltransferase 4 family. MraY subfamily. Mg(2+) is required as a cofactor.

The protein localises to the cell inner membrane. The catalysed reaction is UDP-N-acetyl-alpha-D-muramoyl-L-alanyl-gamma-D-glutamyl-meso-2,6-diaminopimeloyl-D-alanyl-D-alanine + di-trans,octa-cis-undecaprenyl phosphate = di-trans,octa-cis-undecaprenyl diphospho-N-acetyl-alpha-D-muramoyl-L-alanyl-D-glutamyl-meso-2,6-diaminopimeloyl-D-alanyl-D-alanine + UMP. Its pathway is cell wall biogenesis; peptidoglycan biosynthesis. Catalyzes the initial step of the lipid cycle reactions in the biosynthesis of the cell wall peptidoglycan: transfers peptidoglycan precursor phospho-MurNAc-pentapeptide from UDP-MurNAc-pentapeptide onto the lipid carrier undecaprenyl phosphate, yielding undecaprenyl-pyrophosphoryl-MurNAc-pentapeptide, known as lipid I. The chain is Phospho-N-acetylmuramoyl-pentapeptide-transferase from Anaeromyxobacter dehalogenans (strain 2CP-1 / ATCC BAA-258).